The primary structure comprises 273 residues: Chondrolectin (273 aa).

Positions 1–21 (MSRVVSLLLGAALLCGHGAFC) are cleaved as a signal peptide. At 22–216 (RRVVSGQKVC…VVTEAGIIPN (195 aa)) the chain is on the extracellular side. In terms of domain architecture, C-type lectin spans 35–179 (FKHPCYKMAY…CNMKHNYICK (145 aa)). 2 cysteine pairs are disulfide-bonded: C61–C178 and C144–C170. A glycan (N-linked (GlcNAc...) asparagine) is linked at N86. The chain crosses the membrane as a helical span at residues 217–237 (LIYVVIPTIPLLLLILVAFGT). Over 238-273 (CCFQMLHKSKGRTKTSPNQSTLWISKSTRKESGMEV) the chain is Cytoplasmic. The disordered stretch occupies residues 248–273 (GRTKTSPNQSTLWISKSTRKESGMEV). Positions 251-263 (KTSPNQSTLWISK) are enriched in polar residues.

Interacts with RABGGTB. N-glycosylated. In terms of tissue distribution, found in spleen, testis, prostate and fetal liver. Expression limited to vascular muscle of testis, smooth muscle of prostate stroma, heart muscle, skeletal muscle, crypts of small intestine, and red pulp of spleen. B lymphocytes express isoform 2 only; peripheral blood T lymphocytes express isoform 3 only; granulocytes and monocytes express neither isoform 2 nor isoform 3. During development of T lymphocytes, bone marrow progenitor cells express isoform 2 only; thymocytes at different stages of maturation express predominantly isoform 2 and weakly isoform 3, and mature thymocytes express only isoform 2.

It is found in the cytoplasm. Its subcellular location is the membrane. It localises to the endoplasmic reticulum. The protein resides in the endoplasmic reticulum membrane. Functionally, may play a role in the development of the nervous system such as in neurite outgrowth and elongation. May be involved in motor axon growth and guidance. The chain is Chondrolectin (CHODL) from Homo sapiens (Human).